The chain runs to 1153 residues: PPi-type phosphoenolpyruvate carboxykinase 3 (1153 aa).

Residues Arg1085 to Glu1131 are a coiled coil.

The protein belongs to the PPi-type phosphoenolpyruvate carboxykinase family. As to quaternary structure, monomer and trimer; forms heterotrimers with PEPCK1 and PEPCK2.

It is found in the cytoplasm. The protein resides in the cytosol. It carries out the reaction oxaloacetate + diphosphate = phosphoenolpyruvate + phosphate + CO2. Inorganic pyrophosphate (PPi)-dependent phosphoenolpyruvate carboxykinase, which regulates the carbon flow of the central metabolism by fixing CO(2) to phosphoenolpyruvate to produce oxaloacetate. Can also produce pyruvate and diphosphate from phosphoenolpyruvate and phosphate. The sequence is that of PPi-type phosphoenolpyruvate carboxykinase 3 from Entamoeba histolytica (strain ATCC 30459 / HM-1:IMSS / ABRM).